We begin with the raw amino-acid sequence, 67 residues long: Histone H2A (67 aa).

At Gln60 the chain carries N5-methylglutamine.

The protein belongs to the histone H2A family. In terms of assembly, the nucleosome is a histone octamer containing two molecules each of H2A, H2B, H3 and H4 assembled in one H3-H4 heterotetramer and two H2A-H2B heterodimers. The octamer wraps approximately 147 bp of DNA.

It is found in the nucleus. The protein localises to the chromosome. Core component of nucleosome. Nucleosomes wrap and compact DNA into chromatin, limiting DNA accessibility to the cellular machineries which require DNA as a template. Histones thereby play a central role in transcription regulation, DNA repair, DNA replication and chromosomal stability. DNA accessibility is regulated via a complex set of post-translational modifications of histones, also called histone code, and nucleosome remodeling. The sequence is that of Histone H2A from Olisthodiscus luteus (Marine phytoflagellate).